The sequence spans 421 residues: Protein HOMOLOG OF MAMMALIAN LYST-INTERACTING PROTEIN 5 (421 aa).

S2 is subject to N-acetylserine. A disordered region spans residues I146–P374. Residues S165–T185 show a composition bias toward polar residues. Basic and acidic residues predominate over residues H188 to F207. The span at L245 to H258 shows a compositional bias: pro residues. Residues N278 to Q293 show a composition bias toward polar residues. Low complexity-rich tracts occupy residues S294–P308 and P317–S337.

This sequence belongs to the VTA1 family. As to quaternary structure, homodimer. Interacts with SKD1/VPS4, VPS60-1, CHMP1A and CHMP1B. Binds to PROS/At4g24370. Interacts with MPK6 and MPK3. Post-translationally, phosphorylated by activated MPK6 and MPK3, this activation is required to trigger multivesicular bodies (MVBs) trafficking upon plant infection.

It localises to the cytoplasm. It is found in the endosome membrane. The protein localises to the nucleus. Its subcellular location is the endosome. The protein resides in the multivesicular body. In terms of biological role, involved in the endosomal multivesicular bodies (MVB) pathway. MVBs contain intraluminal vesicles (ILVs) that are generated by invagination and scission from the limiting membrane of the endosome and are delivered to lysosomes enabling degradation of membrane proteins. Thought to be a cofactor of SKD1/VPS4, which catalyzes the disassembly of membrane-associated ESCRT-III. Target of pathogen-responsive mitogen-activated protein kinases (MPKs) that plays a critical role in plant basal resistance to Pseudomonas syringae in a SKD1-dependent manner by promoting multivesicular bodies (MVBs) trafficking upon plant infection. This is Protein HOMOLOG OF MAMMALIAN LYST-INTERACTING PROTEIN 5 from Arabidopsis thaliana (Mouse-ear cress).